The sequence spans 483 residues: Regulatory protein ViaA (483 aa).

It belongs to the ViaA family. Homodimer. Interacts with RavA.

The protein localises to the cytoplasm. Functionally, component of the RavA-ViaA chaperone complex, which may act on the membrane to optimize the function of some of the respiratory chains. ViaA stimulates the ATPase activity of RavA. This chain is Regulatory protein ViaA, found in Shigella boydii serotype 18 (strain CDC 3083-94 / BS512).